Consider the following 385-residue polypeptide: Histidinol-phosphate aminotransferase (385 aa).

Position 230 is an N6-(pyridoxal phosphate)lysine (Lys-230).

This sequence belongs to the class-II pyridoxal-phosphate-dependent aminotransferase family. Pyridoxal 5'-phosphate serves as cofactor.

The enzyme catalyses L-histidinol phosphate + 2-oxoglutarate = 3-(imidazol-4-yl)-2-oxopropyl phosphate + L-glutamate. The protein operates within amino-acid biosynthesis; L-histidine biosynthesis; L-histidine from 5-phospho-alpha-D-ribose 1-diphosphate: step 7/9. The protein is Histidinol-phosphate aminotransferase of Saccharomyces cerevisiae (strain ATCC 204508 / S288c) (Baker's yeast).